The following is a 579-amino-acid chain: MDDKHQQRNLVIVTILSALILFGWSFVTKHWLSTPPAPTQQGKNQPKAELTAEESGDKPLKPVDQVLQETPRLPILTESVEGSVNLKGLRLDDLTLIRHRETLAKNSPAVRLFSPAGTENAWFTSFGWTGENVALPNADSLWKADSDKLTADHPVNFYWNNQQGQIFRITLSVDHDYMFNATESVINRGNSPVIVQPYVLTNHQGVFKTASSWTLHTGPIGVFNGSVNYHVDFADIDKATNNSIRNNTQGGWIGFSDKYWLTALAPHNQKIAIDTDFRSSSNHHYQADFTVAPVVVAAGKTASTSVDVFAGAKEVRVLDRYRDQLHLPHFDKAIDWGWFAIIEKVFFYYLDWLFLHVGNYGLAIILMVFTIRALIFPIANKQYASMASMRRLQPKMQAVRERYKNDEARMRQELVTLYQKEKVNPFAGCLPMFIQFPIFIALYKTLLVTIESRHQPFILWIKDLSAPDPLTPFNLFGLLHFTPPHFLMIGVLPIILGITMWLQFRASPQQLEPAQQQIMSFLPLISVIFMAPLAAGLQVYYIFNNLISLAQMMWLQHRHSTPEERQDRAERKRPSKKKA.

A helical transmembrane segment spans residues 10–30 (LVIVTILSALILFGWSFVTKH). Residues 35–61 (PPAPTQQGKNQPKAELTAEESGDKPLK) form a disordered region. Transmembrane regions (helical) follow at residues 330-350 (FDKAIDWGWFAIIEKVFFYYL), 351-371 (DWLFLHVGNYGLAIILMVFTI), 423-443 (VNPFAGCLPMFIQFPIFIALY), 478-498 (LLHFTPPHFLMIGVLPIILGI), and 523-543 (PLISVIFMAPLAAGLQVYYIF). Positions 560–572 (STPEERQDRAERK) are enriched in basic and acidic residues. Positions 560–579 (STPEERQDRAERKRPSKKKA) are disordered.

Belongs to the OXA1/ALB3/YidC family. Type 1 subfamily. In terms of assembly, interacts with the Sec translocase complex via SecD. Specifically interacts with transmembrane segments of nascent integral membrane proteins during membrane integration.

It is found in the cell inner membrane. In terms of biological role, required for the insertion and/or proper folding and/or complex formation of integral membrane proteins into the membrane. Involved in integration of membrane proteins that insert both dependently and independently of the Sec translocase complex, as well as at least some lipoproteins. Aids folding of multispanning membrane proteins. The polypeptide is Membrane protein insertase YidC (Zymomonas mobilis subsp. mobilis (strain ATCC 31821 / ZM4 / CP4)).